A 319-amino-acid polypeptide reads, in one-letter code: Putative ribose-phosphate pyrophosphokinase 2 (319 aa).

ATP is bound by residues 40–42 (DGE) and 99–100 (RQ). Residue His-133 coordinates Mg(2+). D-ribose 5-phosphate is bound by residues Asp-222 and 226–230 (NTGRT).

Belongs to the ribose-phosphate pyrophosphokinase family. Class I subfamily. As to quaternary structure, homohexamer. The cofactor is Mg(2+).

Its subcellular location is the cytoplasm. The enzyme catalyses D-ribose 5-phosphate + ATP = 5-phospho-alpha-D-ribose 1-diphosphate + AMP + H(+). The protein operates within metabolic intermediate biosynthesis; 5-phospho-alpha-D-ribose 1-diphosphate biosynthesis; 5-phospho-alpha-D-ribose 1-diphosphate from D-ribose 5-phosphate (route I): step 1/1. In terms of biological role, involved in the biosynthesis of the central metabolite phospho-alpha-D-ribosyl-1-pyrophosphate (PRPP) via the transfer of pyrophosphoryl group from ATP to 1-hydroxyl of ribose-5-phosphate (Rib-5-P). The chain is Putative ribose-phosphate pyrophosphokinase 2 from Streptococcus pneumoniae serotype 4 (strain ATCC BAA-334 / TIGR4).